Here is a 787-residue protein sequence, read N- to C-terminus: Protein smoothened (787 aa).

Positions 1–27 (MAAARPARGPELPLLGLLLLLLLGDPG) are cleaved as a signal peptide. The Extracellular segment spans residues 28-233 (RGAASSGNAT…EAEHQDMHSY (206 aa)). The segment at 30-60 (AASSGNATGPGPRSAGGSARRSAAVTGPPPP) is disordered. Asparagine 35 carries an N-linked (GlcNAc...) asparagine glycan. Residues 38–53 (GPGPRSAGGSARRSAA) show a composition bias toward low complexity. 5 disulfide bridges follow: cysteine 64-cysteine 178, cysteine 70-cysteine 134, cysteine 78-cysteine 127, cysteine 118-cysteine 154, and cysteine 147-cysteine 169. The region spanning 65–181 (GRAAPCEPLR…DRFPEGCTNE (117 aa)) is the FZ domain. Aspartate 95 is a binding site for cholesterol. Asparagine 188 carries N-linked (GlcNAc...) asparagine glycosylation. Cystine bridges form between cysteine 193–cysteine 213 and cysteine 217–cysteine 295. The helical transmembrane segment at 234–254 (IAAFGAVTGLCTLFTLATFVA) threads the bilayer. Residues 255 to 262 (DWRNSNRY) lie on the Cytoplasmic side of the membrane. A helical transmembrane segment spans residues 263-283 (PAVILFYVNACFFVGSIGWLA). At 284–314 (QFMDGARREIVCRADGTMRLGEPTSNETLSC) the chain is on the extracellular side. Asparagine 309 carries N-linked (GlcNAc...) asparagine glycosylation. Cysteine 314 and cysteine 390 are disulfide-bonded. A helical membrane pass occupies residues 315 to 335 (VIIFVIVYYALMAGVVWFVVL). The Cytoplasmic portion of the chain corresponds to 336 to 358 (TYAWHTSFKALGTTYQPLSGKTS). The helical transmembrane segment at 359 to 379 (YFHLLTWSLPFVLTVAILAVA) threads the bilayer. Topologically, residues 380-402 (QVDGDSVSGICFVGYKNYRYRAG) are extracellular. Tyrosine 394 provides a ligand contact to cholesterol. The chain crosses the membrane as a helical span at residues 403–423 (FVLAPIGLVLIVGGYFLIRGV). Over 424–451 (MTLFSIKSNHPGLLSEKAASKINETMLR) the chain is Cytoplasmic. Residues 452–472 (LGIFGFLAFGFVLITFSCHFY) traverse the membrane as a helical segment. The Extracellular segment spans residues 473–524 (DFFNQAEWERSFRDYVLCQANVTIGLPTKQPIPDCEIKNRPSLLVEKINLFA). Residues cysteine 490 and cysteine 507 are joined by a disulfide bond. A helical transmembrane segment spans residues 525 to 545 (MFGTGIAMSTWVWTKATLLIW). The tract at residues 538 to 569 (TKATLLIWRRTWCRLTGQSDDEPKRIKKSKMI) is interaction with BBS5 and BBS7. Topologically, residues 546 to 787 (RRTWCRLTGQ…TELMDADSDF (242 aa)) are cytoplasmic. Phosphoserine occurs at positions 556, 574, and 590. Residues 570-653 (AKAFSKRHEL…TPVPPEEQAN (84 aa)) form a required for interaction with PRKACA region. The tract at residues 581–593 (QNPGQELSFSMHT) is interaction with DLG5. The residue at position 593 (threonine 593) is a Phosphothreonine. Phosphoserine occurs at positions 595 and 638. Threonine 640 and threonine 644 each carry phosphothreonine. Serine 662 is modified (phosphoserine). Positions 667–704 (KRLGRKKKRRKRKKEVCPLAPPPELHPPAPAPSTIPRL) are disordered. The span at 668–680 (RLGRKKKRRKRKK) shows a compositional bias: basic residues. Residues 685 to 699 (LAPPPELHPPAPAPS) are compositionally biased toward pro residues.

The protein belongs to the G-protein coupled receptor Fz/Smo family. In terms of assembly, homodimer. Interacts (via C-terminus) with protein kinase A catalytic subunit PRKACA; interacts with free PRKACA subunits and the interaction leads to sequestration of PRKACA at the membrane, preventing PRKACA-mediated phosphorylation of GLI transcription factors. Interacts with ARRB2. Interacts with KIF7. Interacts with BBS5 and BBS7; the interactions are indicative for the association of SMO with the BBsome complex to facilitate ciliary localization of SMO. Interacts with DLG5 and SDCBP. Interacts with GAS8/DRC4. Post-translationally, phosphorylation by GRK kinases is required for interaction with protein kinase A catalytic subunit PRKACA.

The protein resides in the cell membrane. The protein localises to the cell projection. Its subcellular location is the cilium. In terms of biological role, g protein-coupled receptor which associates with the patched protein (PTCH) to transduce hedgehog protein signaling. Binding of sonic hedgehog (SHH) to its receptor patched prevents inhibition of smoothened (SMO) by patched. When active, SMO binds to and sequesters protein kinase A catalytic subunit PRKACA at the cell membrane, preventing PRKACA-mediated phosphorylation of GLI transcription factors which releases the GLI proteins from PRKACA-mediated inhibition and allows for transcriptional activation of hedgehog pathway target genes. Required for the accumulation of KIF7, GLI2 and GLI3 in the cilia. Interacts with DLG5 at the ciliary base to induce the accumulation of KIF7 and GLI2 at the ciliary tip for GLI2 activation. In Homo sapiens (Human), this protein is Protein smoothened (SMO).